The following is an 88-amino-acid chain: Mini zinc finger protein 3 (88 aa).

Residues 26-72 (YVECQKNHAANIGGYAVDGCREFMASGGDDALTCAACGCHRNFHRRE) form a ZF-HD dimerization-type; degenerate zinc finger.

Homo- and heterodimers. Interacts with ZHD3, ZHD5, ZHD6, ZHD7, ZHD8, ZHD9, ZHD10 and ZHD13. Mostly expressed in roots, stems and flowers, present in seedlings and leaves, and weakly observed in inflorescence and siliques.

It is found in the cytoplasm. Its function is as follows. Inhibits zinc finger homeodomain (ZHD) transcription factors by interacting with them to prevent both their nuclear localization and their DNA-binding properties. Involved in integrating signals from multiple hormones by regulating the expression of specific genes. Promotes the formation of ectopic shoot meristems on leaf margins. The protein is Mini zinc finger protein 3 (MIF3) of Arabidopsis thaliana (Mouse-ear cress).